We begin with the raw amino-acid sequence, 268 residues long: Shikimate dehydrogenase (NADP(+)) (268 aa).

Residues 13 to 15 (SLS) and Thr60 each bind shikimate. The active-site Proton acceptor is Lys64. Glu76 contacts NADP(+). Residues Asn85 and Asp100 each coordinate shikimate. Residues 124 to 128 (GAGGA), 148 to 153 (NRTMAR), and Ile209 contribute to the NADP(+) site. Tyr211 contacts shikimate. Residue Gly232 coordinates NADP(+).

This sequence belongs to the shikimate dehydrogenase family. In terms of assembly, homodimer.

The catalysed reaction is shikimate + NADP(+) = 3-dehydroshikimate + NADPH + H(+). Its pathway is metabolic intermediate biosynthesis; chorismate biosynthesis; chorismate from D-erythrose 4-phosphate and phosphoenolpyruvate: step 4/7. Its function is as follows. Involved in the biosynthesis of the chorismate, which leads to the biosynthesis of aromatic amino acids. Catalyzes the reversible NADPH linked reduction of 3-dehydroshikimate (DHSA) to yield shikimate (SA). This chain is Shikimate dehydrogenase (NADP(+)), found in Staphylococcus aureus (strain bovine RF122 / ET3-1).